The primary structure comprises 898 residues: Protein kintoun (898 aa).

Disordered stretches follow at residues 558–680 and 765–822; these read GELK…VESD and ILGQ…SGIS. Basic and acidic residues predominate over residues 575–602; that stretch reads INTRTVEDDTKVAKENVKKVDQETAHEG. The segment covering 603–616 has biased composition (basic residues); the sequence is KKSKKNQRRKNKKR. Residues 641-656 show a composition bias toward polar residues; it reads NEANSFEGTGSSSEAT.

Belongs to the PIH1 family. Kintoun subfamily.

The protein localises to the cytoplasm. Required for cytoplasmic pre-assembly of axonemal dyneins, thereby playing a central role in motility in cilia and flagella. Involved in pre-assembly of dynein arm complexes in the cytoplasm before intraflagellar transport loads them for the ciliary compartment. This Aedes aegypti (Yellowfever mosquito) protein is Protein kintoun.